The primary structure comprises 133 residues: Cytochrome c-type biogenesis protein CcmE (133 aa).

Topologically, residues 1-7 are cytoplasmic; it reads MKRKHKR. The chain crosses the membrane as a helical; Signal-anchor for type II membrane protein span at residues 8–28; that stretch reads LLFIIVTFIIFGSSVVIVLNK. At 29-133 the chain is on the periplasmic side; the sequence is LRSNISFFFT…NYKPGKYRAK (105 aa). Residues histidine 121 and tyrosine 125 each contribute to the heme site.

This sequence belongs to the CcmE/CycJ family.

The protein resides in the cell inner membrane. Its function is as follows. Heme chaperone required for the biogenesis of c-type cytochromes. Transiently binds heme delivered by CcmC and transfers the heme to apo-cytochromes in a process facilitated by CcmF and CcmH. The chain is Cytochrome c-type biogenesis protein CcmE from Ehrlichia canis (strain Jake).